Consider the following 82-residue polypeptide: DNA-directed RNA polymerase subunit omega (82 aa).

The protein belongs to the RNA polymerase subunit omega family. In cyanobacteria the RNAP catalytic core is composed of 2 alpha, 1 beta, 1 beta', 1 gamma and 1 omega subunit. When a sigma factor is associated with the core the holoenzyme is formed, which can initiate transcription.

It catalyses the reaction RNA(n) + a ribonucleoside 5'-triphosphate = RNA(n+1) + diphosphate. Its function is as follows. Promotes RNA polymerase assembly. Latches the N- and C-terminal regions of the beta' subunit thereby facilitating its interaction with the beta and alpha subunits. In Trichodesmium erythraeum (strain IMS101), this protein is DNA-directed RNA polymerase subunit omega.